The following is a 310-amino-acid chain: Putative type II methyltransferase M.MJ0563P (310 aa).

The SAM-dependent MTase C5-type domain maps to 1-310 (MNVIDLFSGC…AIAKEIKKQL (310 aa)). Cys77 is an active-site residue.

It belongs to the class I-like SAM-binding methyltransferase superfamily. C5-methyltransferase family.

It catalyses the reaction a 2'-deoxycytidine in DNA + S-adenosyl-L-methionine = a 5-methyl-2'-deoxycytidine in DNA + S-adenosyl-L-homocysteine + H(+). In terms of biological role, a putative methylase that may protect DNA from cleavage by an unknown endonuclease. This chain is Putative type II methyltransferase M.MJ0563P, found in Methanocaldococcus jannaschii (strain ATCC 43067 / DSM 2661 / JAL-1 / JCM 10045 / NBRC 100440) (Methanococcus jannaschii).